We begin with the raw amino-acid sequence, 426 residues long: 3-phosphoshikimate 1-carboxyvinyltransferase (426 aa).

Positions 22, 23, and 27 each coordinate 3-phosphoshikimate. K22 serves as a coordination point for phosphoenolpyruvate. Positions 96 and 124 each coordinate phosphoenolpyruvate. Residues S170, S171, Q172, S198, D314, N337, and K341 each coordinate 3-phosphoshikimate. Q172 lines the phosphoenolpyruvate pocket. D314 serves as the catalytic Proton acceptor. Residues R345, R387, and K412 each contribute to the phosphoenolpyruvate site.

It belongs to the EPSP synthase family. In terms of assembly, monomer.

It is found in the cytoplasm. It carries out the reaction 3-phosphoshikimate + phosphoenolpyruvate = 5-O-(1-carboxyvinyl)-3-phosphoshikimate + phosphate. It functions in the pathway metabolic intermediate biosynthesis; chorismate biosynthesis; chorismate from D-erythrose 4-phosphate and phosphoenolpyruvate: step 6/7. Catalyzes the transfer of the enolpyruvyl moiety of phosphoenolpyruvate (PEP) to the 5-hydroxyl of shikimate-3-phosphate (S3P) to produce enolpyruvyl shikimate-3-phosphate and inorganic phosphate. This chain is 3-phosphoshikimate 1-carboxyvinyltransferase, found in Shewanella piezotolerans (strain WP3 / JCM 13877).